The following is a 243-amino-acid chain: Small ribosomal subunit protein uS3 (243 aa).

The KH type-2 domain occupies 39 to 107 (LRKLISKELQ…KIKLNIKEIH (69 aa)). The disordered stretch occupies residues 212–243 (VAKSPAEPATTAPTPAPERRERQPRRNSNASA).

It belongs to the universal ribosomal protein uS3 family. In terms of assembly, part of the 30S ribosomal subunit. Forms a tight complex with proteins S10 and S14.

Binds the lower part of the 30S subunit head. Binds mRNA in the 70S ribosome, positioning it for translation. This chain is Small ribosomal subunit protein uS3, found in Chloroflexus aurantiacus (strain ATCC 29364 / DSM 637 / Y-400-fl).